The following is a 328-amino-acid chain: Tryptophan--tRNA ligase (328 aa).

Residues Gln10–Thr12 and Gly18–Asn19 contribute to the ATP site. The 'HIGH' region motif lies at Ala11 to Asn19. L-tryptophan is bound at residue Asp134. Residues Gly146–Asp148, Ile186, and Lys195–Ser199 each bind ATP. The short motif at Lys195–Ser199 is the 'KMSKS' region element.

The protein belongs to the class-I aminoacyl-tRNA synthetase family. In terms of assembly, homodimer.

The protein resides in the cytoplasm. It catalyses the reaction tRNA(Trp) + L-tryptophan + ATP = L-tryptophyl-tRNA(Trp) + AMP + diphosphate + H(+). In terms of biological role, catalyzes the attachment of tryptophan to tRNA(Trp). In Rickettsia bellii (strain RML369-C), this protein is Tryptophan--tRNA ligase.